Reading from the N-terminus, the 78-residue chain is MSESELGRKWDRCLADAVVKIGTGFGLGIVFSLTFFKRRMWPLAFGSGMGLGMAYSNCQHDFQAPYLLHGKYVKEQEQ.

N-acetylserine is present on S2. Residues A17–F36 form a helical membrane-spanning segment. Topologically, residues K37–Q78 are mitochondrial intermembrane.

Belongs to the MICOS complex subunit Mic10 family. As to quaternary structure, component of the mitochondrial contact site and cristae organizing system (MICOS) complex, composed of at least MICOS10/MIC10, CHCHD3/MIC19, CHCHD6/MIC25, APOOL/MIC27, IMMT/MIC60, APOO/MIC23/MIC26 and MICOS13/MIC13. This complex was also known under the names MINOS or MitOS complex. The MICOS complex associates with mitochondrial outer membrane proteins SAMM50, MTX1 and MTX2 (together described as components of the mitochondrial outer membrane sorting assembly machinery (SAM) complex) and DNAJC11, mitochondrial inner membrane protein TMEM11 and with HSPA9. The MICOS and SAM complexes together with DNAJC11 are part of a large protein complex spanning both membranes termed the mitochondrial intermembrane space bridging (MIB) complex. Interacts with IMMT/MIC60 and MICOS13/MIC13. Interacts with APOO/MIC23/MIC26 and APOOL/MIC27. Interacts with ARMC1.

The protein resides in the mitochondrion inner membrane. In terms of biological role, component of the MICOS complex, a large protein complex of the mitochondrial inner membrane that plays crucial roles in the maintenance of crista junctions, inner membrane architecture, and formation of contact sites to the outer membrane. The polypeptide is MICOS complex subunit MIC10 (Homo sapiens (Human)).